A 245-amino-acid chain; its full sequence is LOB domain-containing protein 16 (245 aa).

Residues 14–116 (SPCGACKFLR…SQVMQMKAQI (103 aa)) enclose the LOB domain. The tract at residues 162–183 (YYGHVNPNNPVSPQSSLEESFS) is disordered.

It belongs to the LOB domain-containing protein family. Homodimer and heterodimer with LBD18. Expressed in roots and faintly in shoots.

The protein resides in the nucleus. Transcriptional activator. Involved in lateral root formation. Regulated by the transcriptional activators ARF7 and ARF19. Functions in the initiation and emergence of lateral roots, in conjunction with LBD18, downstream of ARF7 and ARF19. Acts downstream of the auxin influx carriers AUX1 and LAX1 in the regulation of lateral root initiation and development. The polypeptide is LOB domain-containing protein 16 (LBD16) (Arabidopsis thaliana (Mouse-ear cress)).